The sequence spans 1494 residues: ABC multidrug transporter atrG (1494 aa).

Residues 1 to 11 (MSLLGTINPNL) show a composition bias toward polar residues. Disordered stretches follow at residues 1-48 (MSLL…RTSD) and 84-105 (FSVS…TLNP). N-linked (GlcNAc...) asparagine glycosylation occurs at asparagine 41. 2 N-linked (GlcNAc...) asparagine glycosylation sites follow: asparagine 141 and asparagine 340. In terms of domain architecture, ABC transporter 1 spans 162–416 (LQVGALFRAV…FTTMGFECPE (255 aa)). 2 helical membrane passes run 527–547 (LTMS…SVFY) and 561–581 (ALLF…ILTL). An N-linked (GlcNAc...) asparagine glycan is attached at asparagine 622. 3 helical membrane-spanning segments follow: residues 636–656 (GPFF…SMLF), 669–689 (ALVP…FTIP), and 778–798 (GIMF…TEYI). A glycan (N-linked (GlcNAc...) asparagine) is linked at asparagine 835. The 244-residue stretch at 852 to 1095 (FHWQDVCYDI…LASYFERNGA (244 aa)) folds into the ABC transporter 2 domain. ATP is bound at residue 888 to 895 (GVSGAGKT). The next 5 helical transmembrane spans lie at 1191–1211 (YIYS…FSFF), 1227–1247 (IFML…NFVT), 1276–1296 (LPWN…PIGL), 1312–1332 (LMWL…HMMI), and 1351–1371 (LCLI…FWIF). Asparagine 1410 and asparagine 1432 each carry an N-linked (GlcNAc...) asparagine glycan. The chain crosses the membrane as a helical span at residues 1463-1483 (FGIMWAFIVFNIAAAVFIYWL).

The protein belongs to the ABC transporter superfamily. ABCG family. PDR (TC 3.A.1.205) subfamily.

It is found in the cell membrane. It catalyses the reaction (R)-miconazole(in) + ATP + H2O = (R)-miconazole(out) + ADP + phosphate + H(+). Its function is as follows. Pleiotropic ABC efflux transporter involved in the basal level of azole susceptibility. Confers resistance to miconazole and clotrimazole. In Aspergillus oryzae (strain ATCC 42149 / RIB 40) (Yellow koji mold), this protein is ABC multidrug transporter atrG.